Here is a 129-residue protein sequence, read N- to C-terminus: NADH-ubiquinone oxidoreductase chain 3 (129 aa).

The next 3 helical transmembrane spans lie at 4-24 (FYMY…WLLA), 48-68 (AAFS…DLEI), and 82-102 (GLYG…AFIL).

The protein belongs to the complex I subunit 3 family.

Its subcellular location is the mitochondrion membrane. It catalyses the reaction a ubiquinone + NADH + 5 H(+)(in) = a ubiquinol + NAD(+) + 4 H(+)(out). Functionally, core subunit of the mitochondrial membrane respiratory chain NADH dehydrogenase (Complex I) that is believed to belong to the minimal assembly required for catalysis. Complex I functions in the transfer of electrons from NADH to the respiratory chain. The immediate electron acceptor for the enzyme is believed to be ubiquinone. The chain is NADH-ubiquinone oxidoreductase chain 3 (NAD3) from Candida albicans (strain SC5314 / ATCC MYA-2876) (Yeast).